The primary structure comprises 1249 residues: Cilia- and flagella-associated protein 57 (1249 aa).

WD repeat units lie at residues 105–148, 195–233, 335–374, 386–425, 427–469, 471–506, 509–548, and 635–674; these read FQVQ…AIIK, GESS…WETS, SDKQ…ISKG, LHSA…LELY, EYQE…KEYS, RGCK…NINI, GHTG…RETE, and AHAG…GRGI. Coiled-coil stretches lie at residues 690 to 1056 and 1094 to 1165; these read KTDM…KTDL and SDLQ…SALK.

The protein belongs to the CFAP57 family. May form homodimers. Associates with components of the nexin-dynein regulatory complex (N-DRC) and the CFAP184:CFAP263 complex. As to expression, predominanly expressed in testis, lung and skin. Weak expression in brain and kidney.

It is found in the cytoplasm. It localises to the cytoskeleton. Its subcellular location is the cilium axoneme. Associates with components of the nexin-dynein regulatory complex (N-DRC), a key regulator of ciliary/flagellar motility, and might act as an inner dynein arm (IDA) hub or linkage. The sequence is that of Cilia- and flagella-associated protein 57 from Mus musculus (Mouse).